The following is a 494-amino-acid chain: Glycerol kinase (494 aa).

T13 is a binding site for ADP. The ATP site is built by T13, T14, and S15. T13 is a binding site for sn-glycerol 3-phosphate. R17 serves as a coordination point for ADP. Residues R83, E84, Y135, and D244 each coordinate sn-glycerol 3-phosphate. R83, E84, Y135, D244, and Q245 together coordinate glycerol. ADP-binding residues include T266 and G309. ATP is bound by residues T266, G309, Q313, and G410. Positions 410 and 414 each coordinate ADP.

It belongs to the FGGY kinase family.

It catalyses the reaction glycerol + ATP = sn-glycerol 3-phosphate + ADP + H(+). Its pathway is polyol metabolism; glycerol degradation via glycerol kinase pathway; sn-glycerol 3-phosphate from glycerol: step 1/1. With respect to regulation, inhibited by fructose 1,6-bisphosphate (FBP). In terms of biological role, key enzyme in the regulation of glycerol uptake and metabolism. Catalyzes the phosphorylation of glycerol to yield sn-glycerol 3-phosphate. This chain is Glycerol kinase, found in Shewanella baltica (strain OS223).